We begin with the raw amino-acid sequence, 390 residues long: Nicotinate phosphoribosyltransferase (390 aa).

H211 carries the phosphohistidine; by autocatalysis modification.

This sequence belongs to the NAPRTase family. In terms of processing, transiently phosphorylated on a His residue during the reaction cycle. Phosphorylation strongly increases the affinity for substrates and increases the rate of nicotinate D-ribonucleotide production. Dephosphorylation regenerates the low-affinity form of the enzyme, leading to product release.

It catalyses the reaction nicotinate + 5-phospho-alpha-D-ribose 1-diphosphate + ATP + H2O = nicotinate beta-D-ribonucleotide + ADP + phosphate + diphosphate. Its pathway is cofactor biosynthesis; NAD(+) biosynthesis; nicotinate D-ribonucleotide from nicotinate: step 1/1. Its function is as follows. Catalyzes the synthesis of beta-nicotinate D-ribonucleotide from nicotinate and 5-phospho-D-ribose 1-phosphate at the expense of ATP. In Chromohalobacter salexigens (strain ATCC BAA-138 / DSM 3043 / CIP 106854 / NCIMB 13768 / 1H11), this protein is Nicotinate phosphoribosyltransferase.